A 485-amino-acid polypeptide reads, in one-letter code: uncharacterized protein (485 aa).

The first 23 residues, 1–23 (MRRRVCTVVRAVVCLLSTSLLTT), serve as a signal peptide directing secretion. Cys-24 carries the N-palmitoyl cysteine lipid modification. Cys-24 is lipidated: S-diacylglycerol cysteine. Positions 308 to 327 (SAASSPAQCPSSPSSSSSSS) are enriched in low complexity. The segment at 308–331 (SAASSPAQCPSSPSSSSSSSTNAG) is disordered.

It belongs to the TP013X lipoprotein family.

The protein resides in the cell membrane. This is an uncharacterized protein from Treponema pallidum (strain Nichols).